The following is a 668-amino-acid chain: Biotin biosynthesis bifunctional protein BioWF (668 aa).

R293 is a binding site for substrate. 380–381 lines the pyridoxal 5'-phosphate pocket; sequence GY. Residue H405 participates in substrate binding. Pyridoxal 5'-phosphate is bound by residues S451, 476–479, and 507–510; these read DDAH and TASK. N6-(pyridoxal phosphate)lysine is present on K510.

It in the N-terminal section; belongs to the BioW family. This sequence in the C-terminal section; belongs to the class-II pyridoxal-phosphate-dependent aminotransferase family. BioF subfamily. As to quaternary structure, homodimer. Mg(2+) serves as cofactor. The cofactor is pyridoxal 5'-phosphate.

The catalysed reaction is heptanedioate + ATP + CoA = 6-carboxyhexanoyl-CoA + AMP + diphosphate. It catalyses the reaction 6-carboxyhexanoyl-[ACP] + L-alanine + H(+) = (8S)-8-amino-7-oxononanoate + holo-[ACP] + CO2. The protein operates within metabolic intermediate metabolism; pimeloyl-CoA biosynthesis; pimeloyl-CoA from pimelate: step 1/1. Its pathway is cofactor biosynthesis; biotin biosynthesis. Catalyzes both the decarboxylative condensation of pimeloyl-[acyl-carrier protein] and L-alanine to produce 8-amino-7-oxononanoate (AON), [acyl-carrier protein], and carbon dioxide, and the transformation of pimelate into pimeloyl-CoA with concomitant hydrolysis of ATP to AMP. The sequence is that of Biotin biosynthesis bifunctional protein BioWF from Cutibacterium acnes (strain SK137) (Propionibacterium acnes).